Reading from the N-terminus, the 396-residue chain is Small ribosomal subunit protein uS9m (396 aa).

An N6-acetyllysine modification is found at K287. The segment at 374–396 (PRVRERKKPGQEGARRKFTWKKR) is disordered.

Belongs to the universal ribosomal protein uS9 family. In terms of assembly, component of the mitochondrial small ribosomal subunit (mt-SSU). Mature mammalian 55S mitochondrial ribosomes consist of a small (28S) and a large (39S) subunit. The 28S small subunit contains a 12S ribosomal RNA (12S mt-rRNA) and 30 different proteins. The 39S large subunit contains a 16S rRNA (16S mt-rRNA), a copy of mitochondrial valine transfer RNA (mt-tRNA(Val)), which plays an integral structural role, and 52 different proteins.

It localises to the mitochondrion. The polypeptide is Small ribosomal subunit protein uS9m (MRPS9) (Homo sapiens (Human)).